A 230-amino-acid polypeptide reads, in one-letter code: Ubiquitin carboxyl-terminal hydrolase isozyme L3 (230 aa).

The UCH catalytic domain occupies 5-229; sequence RWLPLEANPE…LRFNAIALSA (225 aa). The segment at 8–13 is interaction with ubiquitin; sequence PLEANP. Cys95 serves as the catalytic Nucleophile. Ser130 carries the phosphoserine modification. An interaction with ubiquitin. Crossover loop which restricts access of large ubiquitin adducts to the active site region spans residues 152–159; sequence AHEGQTEA. Catalysis depends on His169, which acts as the Proton donor. An interaction with ubiquitin region spans residues 219-224; it reads ELRFNA.

Belongs to the peptidase C12 family. In terms of assembly, preferentially binds diubiquitin; the interaction does not hydrolyze diubiquitin but, in vitro, inhibits the hydrolyzing activity on other substrates.

The protein resides in the cytoplasm. The catalysed reaction is Thiol-dependent hydrolysis of ester, thioester, amide, peptide and isopeptide bonds formed by the C-terminal Gly of ubiquitin (a 76-residue protein attached to proteins as an intracellular targeting signal).. With respect to regulation, inhibited by monoubiquitin and diubiquitin. Deubiquitinating enzyme (DUB) that controls levels of cellular ubiquitin through processing of ubiquitin precursors and ubiquitinated proteins. Thiol protease that recognizes and hydrolyzes a peptide bond at the C-terminal glycine of either ubiquitin or NEDD8. Has a 10-fold preference for Arg and Lys at position P3, and exhibits a preference towards 'Lys-48'-linked ubiquitin chains. Deubiquitinates ENAC in apical compartments, thereby regulating apical membrane recycling. Indirectly increases the phosphorylation of IGFIR, AKT and FOXO1 and promotes insulin-signaling and insulin-induced adipogenesis. Required for stress-response retinal, skeletal muscle and germ cell maintenance. May be involved in working memory. Can hydrolyze UBB(+1), a mutated form of ubiquitin which is not effectively degraded by the proteasome. This Sus scrofa (Pig) protein is Ubiquitin carboxyl-terminal hydrolase isozyme L3 (UCHL3).